Reading from the N-terminus, the 473-residue chain is Argininosuccinate lyase (473 aa).

It belongs to the lyase 1 family. Argininosuccinate lyase subfamily.

It is found in the cytoplasm. It carries out the reaction 2-(N(omega)-L-arginino)succinate = fumarate + L-arginine. It participates in amino-acid biosynthesis; L-arginine biosynthesis; L-arginine from L-ornithine and carbamoyl phosphate: step 3/3. The polypeptide is Argininosuccinate lyase (Nocardia farcinica (strain IFM 10152)).